The chain runs to 1369 residues: Serine/threonine-protein kinase SIK3 (1369 aa).

The interval 26–55 is disordered; sequence LLPPPAAGPPAAPAAVPPAAVPARPTAPAS. Residues 27-45 show a composition bias toward pro residues; the sequence is LPPPAAGPPAAPAAVPPAA. Low complexity predominate over residues 46-55; it reads VPARPTAPAS. Residues 66 to 317 enclose the Protein kinase domain; sequence YEIDRTIGKG…MEQICRHKWM (252 aa). The residue at position 71 (Thr71) is a Phosphothreonine. Residues 72–80 and Lys95 contribute to the ATP site; that span reads IGKGNFAVV. Asp188 acts as the Proton acceptor in catalysis. Position 221 is a phosphothreonine (Thr221). Residues 344-384 form the UBA domain; it reads PLNDDVLLAMEDMGLDKERTLQSLRSDAYDHYSAIYSLLCD. At Thr469 the chain carries Phosphothreonine. 5 positions are modified to phosphoserine: Ser551, Ser591, Ser592, Ser674, and Ser695. Positions 775–821 are disordered; it reads IQPSSPPPNHPSNHLFRQPSNSPPPVSSAMITSHGATSPSQFQGLPS. Residues 803 to 818 show a composition bias toward polar residues; it reads AMITSHGATSPSQFQG. Phosphoserine is present on Ser914. The segment at 942 to 993 is disordered; it reads LFSDQSRGSPSSYSPSTGVGFPPTQALKVPPLDQFPTFPPSAQQQPPHYTTS. Over residues 944-957 the composition is skewed to low complexity; that stretch reads SDQSRGSPSSYSPS. Over residues 981–993 the composition is skewed to polar residues; it reads PSAQQQPPHYTTS. Ser1026 is subject to Phosphoserine. Position 1034 is an omega-N-methylarginine (Arg1034). A disordered region spans residues 1314 to 1338; the sequence is DEEDEECGVSLGHEHPGLGDGSQHL.

This sequence belongs to the protein kinase superfamily. CAMK Ser/Thr protein kinase family. SNF1 subfamily. As to quaternary structure, binds to and is activated by YWHAZ when phosphorylated on Thr-221. Interacts with 14-3-3 proteins. Interacts with HDAC4; this interaction leads to HDAC4 retention in the cytoplasm. Interacts with DEPTOR, MLST8/GbetaL, RICTOR and RPTOR. Mg(2+) serves as cofactor. In terms of processing, phosphorylated at Thr-221 by STK11/LKB1 in complex with STE20-related adapter-alpha (STRADA) pseudo kinase and CAB39. In terms of tissue distribution, expressed in hypertrophic chondrocytes in the growth plate.

The protein localises to the cytoplasm. The catalysed reaction is L-seryl-[protein] + ATP = O-phospho-L-seryl-[protein] + ADP + H(+). The enzyme catalyses L-threonyl-[protein] + ATP = O-phospho-L-threonyl-[protein] + ADP + H(+). Its activity is regulated as follows. Activated by phosphorylation on Thr-221. In terms of biological role, positive regulator of mTOR signaling that functions by triggering the degradation of DEPTOR, an mTOR inhibitor. Required for chondrocyte hypertrophy during skeletogenesis. Negatively regulates cAMP signaling pathway possibly by acting on CRTC2/TORC2 and CRTC3/TORC3. Prevents HDAC4 translocation to the nucleus. The sequence is that of Serine/threonine-protein kinase SIK3 (Sik3) from Mus musculus (Mouse).